The sequence spans 327 residues: Pectate lyase A (327 aa).

Residues 1–19 (MQNLKFLIAAVSCLGPALA) form the signal peptide. The N-linked (GlcNAc...) asparagine glycan is linked to Asn99. Positions 140, 169, and 173 each coordinate Ca(2+). Arg226 is an active-site residue.

This sequence belongs to the polysaccharide lyase 1 family. The cofactor is Ca(2+).

It is found in the secreted. The catalysed reaction is Eliminative cleavage of (1-&gt;4)-alpha-D-galacturonan to give oligosaccharides with 4-deoxy-alpha-D-galact-4-enuronosyl groups at their non-reducing ends.. Pectinolytic enzyme consist of four classes of enzymes: pectin lyase, polygalacturonase, pectin methylesterase and rhamnogalacturonase. Among pectinolytic enzymes, pectin lyase is the most important in depolymerization of pectin, since it cleaves internal glycosidic bonds of highly methylated pectins. Favors pectate, the anion, over pectin, the methyl ester. The polypeptide is Pectate lyase A (plyA) (Emericella nidulans (strain FGSC A4 / ATCC 38163 / CBS 112.46 / NRRL 194 / M139) (Aspergillus nidulans)).